Reading from the N-terminus, the 607-residue chain is Elongation factor 4 (607 aa).

The region spanning 11–193 (EKIRNFSIIA…QIVEKVPAPT (183 aa)) is the tr-type G domain. GTP is bound by residues 23–28 (DHGKST) and 140–143 (NKID).

The protein belongs to the TRAFAC class translation factor GTPase superfamily. Classic translation factor GTPase family. LepA subfamily.

It is found in the cell membrane. It catalyses the reaction GTP + H2O = GDP + phosphate + H(+). In terms of biological role, required for accurate and efficient protein synthesis under certain stress conditions. May act as a fidelity factor of the translation reaction, by catalyzing a one-codon backward translocation of tRNAs on improperly translocated ribosomes. Back-translocation proceeds from a post-translocation (POST) complex to a pre-translocation (PRE) complex, thus giving elongation factor G a second chance to translocate the tRNAs correctly. Binds to ribosomes in a GTP-dependent manner. This Streptococcus pneumoniae (strain P1031) protein is Elongation factor 4.